The following is a 188-amino-acid chain: Ribose 1,5-bisphosphate phosphokinase PhnN (188 aa).

Gly9 to Asp16 contacts ATP.

This sequence belongs to the ribose 1,5-bisphosphokinase family.

It carries out the reaction alpha-D-ribose 1,5-bisphosphate + ATP = 5-phospho-alpha-D-ribose 1-diphosphate + ADP. It functions in the pathway metabolic intermediate biosynthesis; 5-phospho-alpha-D-ribose 1-diphosphate biosynthesis; 5-phospho-alpha-D-ribose 1-diphosphate from D-ribose 5-phosphate (route II): step 3/3. In terms of biological role, catalyzes the phosphorylation of ribose 1,5-bisphosphate to 5-phospho-D-ribosyl alpha-1-diphosphate (PRPP). The chain is Ribose 1,5-bisphosphate phosphokinase PhnN from Pectobacterium atrosepticum (strain SCRI 1043 / ATCC BAA-672) (Erwinia carotovora subsp. atroseptica).